The following is a 644-amino-acid chain: ATP-dependent zinc metalloprotease FtsH (644 aa).

Residues M1 to N4 are Cytoplasmic-facing. The chain crosses the membrane as a helical span at residues L5–S25. Topologically, residues E26–L98 are periplasmic. Residues L99–F119 traverse the membrane as a helical segment. Over M120–K644 the chain is Cytoplasmic. G192–T199 is a binding site for ATP. H414 contacts Zn(2+). The active site involves E415. Residues H418 and D492 each contribute to the Zn(2+) site. Residues V598–K644 are disordered. The span at N632–K644 shows a compositional bias: polar residues.

In the central section; belongs to the AAA ATPase family. This sequence in the C-terminal section; belongs to the peptidase M41 family. In terms of assembly, homohexamer. Zn(2+) serves as cofactor.

The protein resides in the cell inner membrane. Acts as a processive, ATP-dependent zinc metallopeptidase for both cytoplasmic and membrane proteins. Plays a role in the quality control of integral membrane proteins. In Shigella flexneri, this protein is ATP-dependent zinc metalloprotease FtsH.